We begin with the raw amino-acid sequence, 724 residues long: Aquaglyceroporin-4 (724 aa).

Disordered stretches follow at residues 1–167 (MADE…SIRR), 248–267 (INMA…NQAD), and 302–396 (AHGL…DLDG). At 1-434 (MADEEIKPTS…VIRLRFREPL (434 aa)) the chain is on the cytoplasmic side. Over residues 87 to 96 (LTGQVPQDND) the composition is skewed to polar residues. The segment covering 252–265 (QQQQQQQQQQPQNQ) has biased composition (low complexity). 2 stretches are compositionally biased toward polar residues: residues 307 to 325 (SPTN…TAPS) and 360 to 370 (PSQTSQNSQNE). A helical transmembrane segment spans residues 435–455 (AELLAVTCQLTLGFCADLVVV). At 456-472 (TSGKNASPAGNEATTDW) the chain is on the extracellular side. A helical transmembrane segment spans residues 473-493 (AWGLASMLGIYIAGGISGAHL). Residues 494-496 (NPA) carry the NPA 1 motif. Topologically, residues 494–513 (NPAISIMLWIYRGFPLRKVP) are cytoplasmic. Residues 514 to 534 (MYVLAQILGAFIAALISFGLY) traverse the membrane as a helical segment. The Extracellular portion of the chain corresponds to 535–567 (QTNIVEYGGTDLKTSDTMGAFITYPRYPWINAS). Asparagine 565 is a glycosylation site (N-linked (GlcNAc...) asparagine). Residues 568-588 (TSFFTEFVGTAILAVAVLALG) traverse the membrane as a helical segment. Residues 589 to 595 (DDMNAPP) lie on the Cytoplasmic side of the membrane. The helical transmembrane segment at 596 to 616 (GAGMSAFILGLVITVLSMAFG) threads the bilayer. The Extracellular portion of the chain corresponds to 617-647 (YNTGAALNPSRDLGPRLALAALGYGKDLFTD). The NPA 2 signature appears at 624–626 (NPS). A helical transmembrane segment spans residues 648–668 (VYWIWGNWCAPILGAIFGAFL). The Cytoplasmic segment spans residues 669–724 (YDAAIFAGGESPVNYPRKRIKRAGHKWRKKWGVRLRKMKPAKKGEDEAYRRWKESQ).

Belongs to the MIP/aquaporin (TC 1.A.8) family.

The protein localises to the membrane. It carries out the reaction H2O(in) = H2O(out). The enzyme catalyses glycerol(in) = glycerol(out). Water channel required to facilitate the transport of water across membranes. May play a role in the vegetative growth. The sequence is that of Aquaglyceroporin-4 from Botryotinia fuckeliana (strain B05.10) (Noble rot fungus).